A 148-amino-acid polypeptide reads, in one-letter code: UPF0178 protein lpg0089 (148 aa).

This sequence belongs to the UPF0178 family.

This Legionella pneumophila subsp. pneumophila (strain Philadelphia 1 / ATCC 33152 / DSM 7513) protein is UPF0178 protein lpg0089.